The chain runs to 77 residues: Large ribosomal subunit protein bL28 (77 aa).

This sequence belongs to the bacterial ribosomal protein bL28 family.

The sequence is that of Large ribosomal subunit protein bL28 from Albidiferax ferrireducens (strain ATCC BAA-621 / DSM 15236 / T118) (Rhodoferax ferrireducens).